Consider the following 207-residue polypeptide: D-aminoacyl-tRNA deacylase 1 (207 aa).

The Gly-cisPro motif, important for rejection of L-amino acids motif lies at 139-140 (GP). A disordered region spans residues 142 to 207 (TIQLESPPAP…EGDVSSEREP (66 aa)). Basic and acidic residues-rich tracts occupy residues 156–167 (LLSKQEKQQQRK) and 178–189 (SSREKAAQRSKV).

It belongs to the DTD family. As to quaternary structure, homodimer.

It localises to the cytoplasm. The enzyme catalyses a D-aminoacyl-tRNA + H2O = a tRNA + a D-alpha-amino acid + H(+). It catalyses the reaction glycyl-tRNA(Ala) + H2O = tRNA(Ala) + glycine + H(+). Functionally, D-aminoacyl-tRNA deacylase, with no observable activity on tRNAs charged with their cognate L-amino acid. Hydrolyzes correctly charged, achiral, glycyl-tRNA(Gly). Deacylates mischarged D.melanogaster and E.coli glycyl-tRNA(Ala), protecting cells against glycine mischarging by AlaRS. Acts via tRNA-based rather than protein-based catalysis; rejects L-amino acids rather than detecting D-amino acids in the active site. By recycling D-aminoacyl-tRNA to D-amino acids and free tRNA molecules, this enzyme counteracts the toxicity associated with the formation of D-aminoacyl-tRNA entities in vivo and helps enforce protein L-homochirality. This is D-aminoacyl-tRNA deacylase 1 from Danio rerio (Zebrafish).